The sequence spans 267 residues: Cell division protein FtsQ (267 aa).

Topologically, residues 1–32 (MRKKTSSNKKKQTKKTNNISLRRKLGLMYKKA) are cytoplasmic. Residues 33-53 (ILGLKIALIIFVCLFVFTKYF) form a helical membrane-spanning segment. Over 54–267 (AGIKTYLTTN…DKNKYYIEKY (214 aa)) the chain is Periplasmic. Residues 73–141 (FKLENVIIEG…NTVYIKLFER (69 aa)) form the POTRA domain.

This sequence belongs to the FtsQ/DivIB family. FtsQ subfamily.

It is found in the cell inner membrane. In terms of biological role, essential cell division protein. This Rickettsia conorii (strain ATCC VR-613 / Malish 7) protein is Cell division protein FtsQ.